The primary structure comprises 269 residues: Regulatory protein RecX (269 aa).

It belongs to the RecX family.

Its subcellular location is the cytoplasm. Functionally, modulates RecA activity. The polypeptide is Regulatory protein RecX (Listeria monocytogenes serotype 4a (strain HCC23)).